The following is a 336-amino-acid chain: NAC domain-containing protein 100 (336 aa).

Residues 16-166 (LPPGFRFHPT…EWVICRVFQK (151 aa)) form the NAC domain. The DNA-binding element occupies 113–172 (VGMKKTLVFYRGRAPKGQKTNWVMHEYRLEGKFSAHNLPKTAKNEWVICRVFQKSAGGKK). A disordered region spans residues 313–336 (RRFDSQEDPSSSTGPVDLEPFWNY).

The protein resides in the nucleus. Its function is as follows. Binds to the promoter regions of genes involved in chlorophyll catabolic processes, such as NYC1, SGR1, SGR2 and PAO. The polypeptide is NAC domain-containing protein 100 (Arabidopsis thaliana (Mouse-ear cress)).